A 215-amino-acid chain; its full sequence is Adenylate kinase (215 aa).

10–15 lines the ATP pocket; that stretch reads GAGKGT. The NMP stretch occupies residues 30–59; that stretch reads STGDMLRAAVKAGSPLGLKVKGVMDSGGLV. AMP-binding positions include Thr-31, Arg-36, 57 to 59, 85 to 88, and Gln-92; these read GLV and GFPR. Residues 122 to 159 are LID; it reads GRRVHAASGRVYHDLHNPPKVAGKDDETGEDLIQREDD. Residues Arg-123 and 132–133 contribute to the ATP site; that span reads VY. AMP contacts are provided by Arg-156 and Arg-167. ATP is bound at residue Gly-201.

Belongs to the adenylate kinase family. In terms of assembly, monomer.

It is found in the cytoplasm. The catalysed reaction is AMP + ATP = 2 ADP. The protein operates within purine metabolism; AMP biosynthesis via salvage pathway; AMP from ADP: step 1/1. Catalyzes the reversible transfer of the terminal phosphate group between ATP and AMP. Plays an important role in cellular energy homeostasis and in adenine nucleotide metabolism. This is Adenylate kinase from Azotobacter vinelandii (strain DJ / ATCC BAA-1303).